Here is a 544-residue protein sequence, read N- to C-terminus: ATP-dependent RNA helicase HAS1 (544 aa).

Low complexity predominate over residues Met-1–Thr-10. Residues Met-1 to Pro-59 are disordered. Basic and acidic residues predominate over residues Asn-18–Pro-29. The segment covering Ala-31–Asp-50 has biased composition (polar residues). The short motif at Val-66–Ala-94 is the Q motif element. The Helicase ATP-binding domain maps to Ile-97–Tyr-273. Residue Ala-110–Thr-117 coordinates ATP. The short motif at Asp-220 to Asp-223 is the DEAD box element. The region spanning Met-287–Ile-456 is the Helicase C-terminal domain. A Bipartite nuclear localization signal motif is present at residues Gln-299–Lys-315. Residues Gly-513 to Lys-544 form a disordered region.

The protein belongs to the DEAD box helicase family. DDX18/HAS1 subfamily. In terms of assembly, associates in the nucleolus with the 60S and pre-60S ribosomal subunits.

The protein localises to the nucleus. Its subcellular location is the nucleolus. It carries out the reaction ATP + H2O = ADP + phosphate + H(+). Its function is as follows. ATP-dependent RNA helicase involved in 40S ribosomal subunit biogenesis. Required for the processing and cleavage of 35S pre-rRNA at sites A0, A1, and A2, leading to mature 18S rRNA. The sequence is that of ATP-dependent RNA helicase HAS1 (HAS1) from Cryptococcus neoformans var. neoformans serotype D (strain JEC21 / ATCC MYA-565) (Filobasidiella neoformans).